A 170-amino-acid polypeptide reads, in one-letter code: E1B protein, small T-antigen (170 aa).

The protein belongs to the adenoviridae E1B 19 kDa protein family.

This is E1B protein, small T-antigen from Canine adenovirus serotype 2 (CAdV-2).